The sequence spans 470 residues: 6-phosphofructo-2-kinase/fructose-2,6-bisphosphatase (470 aa).

The 6-phosphofructo-2-kinase stretch occupies residues 1 to 249 (MAAVASGQLT…VYYLMNTHVT (249 aa)). S31 is modified (phosphoserine; by PKA). 47–55 (GLRRPGKTY) is a binding site for ATP. Residues R80 and R104 each contribute to the beta-D-fructose 6-phosphate site. The active site involves D130. Beta-D-fructose 6-phosphate contacts are provided by T132 and R138. Residue C160 is part of the active site. 169 to 174 (NIKQVK) is an ATP binding site. The beta-D-fructose 6-phosphate site is built by K174, R195, and Y199. The tract at residues 250–469 (PRAIYLSRHG…AEALVTVPEH (220 aa)) is fructose-2,6-bisphosphatase. Residue R257 coordinates beta-D-fructose 2,6-bisphosphate. Catalysis depends on H258, which acts as the Tele-phosphohistidine intermediate. Beta-D-fructose 2,6-bisphosphate contacts are provided by N264 and G270. E327 acts as the Proton donor/acceptor in catalysis. Beta-D-fructose 2,6-bisphosphate is bound by residues Y338, R352, K356, Y367, Q393, and R397. 349-352 (FALR) contributes to the ATP binding site. ATP contacts are provided by residues 393–397 (QAVMR) and Y429.

In the C-terminal section; belongs to the phosphoglycerate mutase family. As to quaternary structure, homodimer. In terms of tissue distribution, liver.

The enzyme catalyses beta-D-fructose 2,6-bisphosphate + H2O = beta-D-fructose 6-phosphate + phosphate. The catalysed reaction is beta-D-fructose 6-phosphate + ATP = beta-D-fructose 2,6-bisphosphate + ADP + H(+). Phosphorylation results in inhibition of the kinase activity. Synthesis and degradation of fructose 2,6-bisphosphate. The polypeptide is 6-phosphofructo-2-kinase/fructose-2,6-bisphosphatase (Gallus gallus (Chicken)).